The primary structure comprises 518 residues: GMP synthase [glutamine-hydrolyzing] (518 aa).

Residues 8-201 (TVLIIDFGSQ…VLKISNLKGN (194 aa)) form the Glutamine amidotransferase type-1 domain. Cys-85 serves as the catalytic Nucleophile. Catalysis depends on residues His-175 and Glu-177. The 192-residue stretch at 202 to 393 (WSMASYREQT…LGLPEQFIGR (192 aa)) folds into the GMPS ATP-PPase domain. Residue 229-235 (SGGVDSS) coordinates ATP.

Homodimer.

The catalysed reaction is XMP + L-glutamine + ATP + H2O = GMP + L-glutamate + AMP + diphosphate + 2 H(+). It functions in the pathway purine metabolism; GMP biosynthesis; GMP from XMP (L-Gln route): step 1/1. Catalyzes the synthesis of GMP from XMP. This chain is GMP synthase [glutamine-hydrolyzing], found in Bartonella henselae (strain ATCC 49882 / DSM 28221 / CCUG 30454 / Houston 1) (Rochalimaea henselae).